The chain runs to 95 residues: Co-chaperonin GroES (95 aa).

This sequence belongs to the GroES chaperonin family. In terms of assembly, heptamer of 7 subunits arranged in a ring. Interacts with the chaperonin GroEL.

The protein localises to the cytoplasm. In terms of biological role, together with the chaperonin GroEL, plays an essential role in assisting protein folding. The GroEL-GroES system forms a nano-cage that allows encapsulation of the non-native substrate proteins and provides a physical environment optimized to promote and accelerate protein folding. GroES binds to the apical surface of the GroEL ring, thereby capping the opening of the GroEL channel. The sequence is that of Co-chaperonin GroES from Glaesserella parasuis serovar 5 (strain SH0165) (Haemophilus parasuis).